The sequence spans 133 residues: Large ribosomal subunit protein bL19 (133 aa).

It belongs to the bacterial ribosomal protein bL19 family.

Functionally, this protein is located at the 30S-50S ribosomal subunit interface and may play a role in the structure and function of the aminoacyl-tRNA binding site. This is Large ribosomal subunit protein bL19 from Stenotrophomonas maltophilia (strain K279a).